Reading from the N-terminus, the 118-residue chain is Large ribosomal subunit protein uL18 (118 aa).

It belongs to the universal ribosomal protein uL18 family. As to quaternary structure, part of the 50S ribosomal subunit; part of the 5S rRNA/L5/L18/L25 subcomplex. Contacts the 5S and 23S rRNAs.

This is one of the proteins that bind and probably mediate the attachment of the 5S RNA into the large ribosomal subunit, where it forms part of the central protuberance. The sequence is that of Large ribosomal subunit protein uL18 from Nitratiruptor sp. (strain SB155-2).